Reading from the N-terminus, the 424-residue chain is UDP-N-acetylglucosamine 1-carboxyvinyltransferase (424 aa).

22–23 is a binding site for phosphoenolpyruvate; it reads KN. R98 is a UDP-N-acetyl-alpha-D-glucosamine binding site. The Proton donor role is filled by C122. Position 122 is a 2-(S-cysteinyl)pyruvic acid O-phosphothioketal (C122). Residues 127–131, D312, and I334 each bind UDP-N-acetyl-alpha-D-glucosamine; that span reads RPVDQ.

The protein belongs to the EPSP synthase family. MurA subfamily.

The protein resides in the cytoplasm. The catalysed reaction is phosphoenolpyruvate + UDP-N-acetyl-alpha-D-glucosamine = UDP-N-acetyl-3-O-(1-carboxyvinyl)-alpha-D-glucosamine + phosphate. The protein operates within cell wall biogenesis; peptidoglycan biosynthesis. Its function is as follows. Cell wall formation. Adds enolpyruvyl to UDP-N-acetylglucosamine. This Xanthomonas campestris pv. campestris (strain B100) protein is UDP-N-acetylglucosamine 1-carboxyvinyltransferase.